A 128-amino-acid chain; its full sequence is Glycine cleavage system H protein (128 aa).

In terms of domain architecture, Lipoyl-binding spans 25-107; it reads TITVGITHHA…YGAGWFFKIK (83 aa). Residue Lys-66 is modified to N6-lipoyllysine.

It belongs to the GcvH family. As to quaternary structure, the glycine cleavage system is composed of four proteins: P, T, L and H. The cofactor is (R)-lipoate.

Functionally, the glycine cleavage system catalyzes the degradation of glycine. The H protein shuttles the methylamine group of glycine from the P protein to the T protein. The polypeptide is Glycine cleavage system H protein (Neisseria meningitidis serogroup C (strain 053442)).